Consider the following 504-residue polypeptide: Protein Dok-7 (504 aa).

The PH domain occupies 4–109 (AALVEGQVKL…WDTRIRYALG (106 aa)). Positions 105-210 (RYALGEVHRF…RGISPTKGPF (106 aa)) constitute an IRS-type PTB domain. 3 disordered regions span residues 210 to 232 (FGLR…ERVA), 248 to 348 (LSHS…HSSY), and 371 to 483 (SLLS…PHAG). Positions 263–280 (LSSSSSEASHSDISASSR) are enriched in low complexity. Composition is skewed to polar residues over residues 285 to 297 (PEQS…TSQE), 331 to 341 (GRQSSSDSGIA), and 421 to 430 (PASQGSSDHG).

Homodimer. Forms a heterotetramer composed of 2 DOK7 and 2 MUSK molecules which facilitates MUSK trans-autophosphorylation on tyrosine residue and activation. Interacts (via IRS-type PTB domain) with MUSK (via cytoplasmic part); requires MUSK phosphorylation.

The protein resides in the cell membrane. It is found in the synapse. Its function is as follows. Probable muscle-intrinsic activator of MUSK that plays an essential role in neuromuscular synaptogenesis. Acts in aneural activation of MUSK and subsequent acetylcholine receptor (AchR) clustering in myotubes. Induces autophosphorylation of MUSK. This is Protein Dok-7 (Dok7) from Mus musculus (Mouse).